The sequence spans 469 residues: Chromosomal replication initiator protein DnaA (469 aa).

The tract at residues 1-71 (MKEFWQTCVS…EALAAEWYQR (71 aa)) is domain I, interacts with DnaA modulators. The tract at residues 71–131 (RPVQVTFELP…DAANIVYERS (61 aa)) is domain II. A domain III, AAA+ region region spans residues 132-348 (RLNTDLTFEN…GALRKVLAYA (217 aa)). ATP is bound by residues Gly-176, Gly-178, Lys-179, and Thr-180. Residues 349-469 (RFHGRDVLTV…LHVLEQTLKG (121 aa)) are domain IV, binds dsDNA.

The protein belongs to the DnaA family. Oligomerizes as a right-handed, spiral filament on DNA at oriC.

Its subcellular location is the cytoplasm. Its function is as follows. Plays an essential role in the initiation and regulation of chromosomal replication. ATP-DnaA binds to the origin of replication (oriC) to initiate formation of the DNA replication initiation complex once per cell cycle. Binds the DnaA box (a 9 base pair repeat at the origin) and separates the double-stranded (ds)DNA. Forms a right-handed helical filament on oriC DNA; dsDNA binds to the exterior of the filament while single-stranded (ss)DNA is stabiized in the filament's interior. The ATP-DnaA-oriC complex binds and stabilizes one strand of the AT-rich DNA unwinding element (DUE), permitting loading of DNA polymerase. After initiation quickly degrades to an ADP-DnaA complex that is not apt for DNA replication. Binds acidic phospholipids. The chain is Chromosomal replication initiator protein DnaA from Bordetella parapertussis (strain 12822 / ATCC BAA-587 / NCTC 13253).